The primary structure comprises 225 residues: Small ribosomal subunit protein mS26 (225 aa).

It belongs to the mitochondrion-specific ribosomal protein mS26 family. In terms of assembly, component of the mitochondrial ribosome small subunit (28S) which comprises a 12S rRNA and about 30 distinct proteins.

It localises to the mitochondrion. The chain is Small ribosomal subunit protein mS26 (mRpS26) from Drosophila melanogaster (Fruit fly).